We begin with the raw amino-acid sequence, 212 residues long: ATP-dependent Clp protease proteolytic subunit (212 aa).

Ser-106 serves as the catalytic Nucleophile. His-131 is a catalytic residue.

This sequence belongs to the peptidase S14 family. Fourteen ClpP subunits assemble into 2 heptameric rings which stack back to back to give a disk-like structure with a central cavity, resembling the structure of eukaryotic proteasomes.

It localises to the cytoplasm. It carries out the reaction Hydrolysis of proteins to small peptides in the presence of ATP and magnesium. alpha-casein is the usual test substrate. In the absence of ATP, only oligopeptides shorter than five residues are hydrolyzed (such as succinyl-Leu-Tyr-|-NHMec, and Leu-Tyr-Leu-|-Tyr-Trp, in which cleavage of the -Tyr-|-Leu- and -Tyr-|-Trp bonds also occurs).. In terms of biological role, cleaves peptides in various proteins in a process that requires ATP hydrolysis. Has a chymotrypsin-like activity. Plays a major role in the degradation of misfolded proteins. This chain is ATP-dependent Clp protease proteolytic subunit, found in Rhodopseudomonas palustris (strain HaA2).